Reading from the N-terminus, the 253-residue chain is Phosphoglycerate mutase 2 (253 aa).

Thr3 carries the post-translational modification Phosphothreonine. Residues Arg10–Asn17, Cys23–Gly24, Arg62, Glu89–Tyr92, Lys100, and Arg116–Arg117 each bind substrate. Residue His11 is the Tele-phosphohistidine intermediate of the active site. Ser14 carries the post-translational modification Phosphoserine. Glu89 acts as the Proton donor/acceptor in catalysis. Ser118 carries the phosphoserine modification. Residues Tyr132 and Tyr133 each carry the phosphotyrosine modification. Position 135 is a phosphoserine (Ser135). Thr152 carries the phosphothreonine modification. Gly187–Asn188 lines the substrate pocket.

It belongs to the phosphoglycerate mutase family. BPG-dependent PGAM subfamily. In terms of assembly, homodimer.

It carries out the reaction (2R)-2-phosphoglycerate = (2R)-3-phosphoglycerate. The catalysed reaction is (2R)-3-phospho-glyceroyl phosphate = (2R)-2,3-bisphosphoglycerate + H(+). Functionally, interconversion of 3- and 2-phosphoglycerate with 2,3-bisphosphoglycerate as the primer of the reaction. Can also catalyze the reaction of EC 5.4.2.4 (synthase), but with a reduced activity. This Bos taurus (Bovine) protein is Phosphoglycerate mutase 2 (PGAM2).